The chain runs to 147 residues: Large ribosomal subunit protein uL13 (147 aa).

This sequence belongs to the universal ribosomal protein uL13 family. In terms of assembly, part of the 50S ribosomal subunit.

In terms of biological role, this protein is one of the early assembly proteins of the 50S ribosomal subunit, although it is not seen to bind rRNA by itself. It is important during the early stages of 50S assembly. The polypeptide is Large ribosomal subunit protein uL13 (Levilactobacillus brevis (strain ATCC 367 / BCRC 12310 / CIP 105137 / JCM 1170 / LMG 11437 / NCIMB 947 / NCTC 947) (Lactobacillus brevis)).